The sequence spans 274 residues: Formamidopyrimidine-DNA glycosylase (274 aa).

Proline 2 (schiff-base intermediate with DNA) is an active-site residue. Glutamate 3 serves as the catalytic Proton donor. Residue lysine 58 is the Proton donor; for beta-elimination activity of the active site. 2 residues coordinate DNA: histidine 91 and arginine 110. The FPG-type zinc finger occupies 238–272 (QVYDKTGQECVRCGTIIEKIQLGGRGTHFCPNCQR). The Proton donor; for delta-elimination activity role is filled by arginine 262.

This sequence belongs to the FPG family. In terms of assembly, monomer. Zn(2+) is required as a cofactor.

It catalyses the reaction Hydrolysis of DNA containing ring-opened 7-methylguanine residues, releasing 2,6-diamino-4-hydroxy-5-(N-methyl)formamidopyrimidine.. The enzyme catalyses 2'-deoxyribonucleotide-(2'-deoxyribose 5'-phosphate)-2'-deoxyribonucleotide-DNA = a 3'-end 2'-deoxyribonucleotide-(2,3-dehydro-2,3-deoxyribose 5'-phosphate)-DNA + a 5'-end 5'-phospho-2'-deoxyribonucleoside-DNA + H(+). Involved in base excision repair of DNA damaged by oxidation or by mutagenic agents. Acts as a DNA glycosylase that recognizes and removes damaged bases. Has a preference for oxidized purines, such as 7,8-dihydro-8-oxoguanine (8-oxoG). Has AP (apurinic/apyrimidinic) lyase activity and introduces nicks in the DNA strand. Cleaves the DNA backbone by beta-delta elimination to generate a single-strand break at the site of the removed base with both 3'- and 5'-phosphates. This is Formamidopyrimidine-DNA glycosylase from Streptococcus pneumoniae (strain ATCC BAA-255 / R6).